A 470-amino-acid polypeptide reads, in one-letter code: Sorting nexin-17 (470 aa).

In terms of domain architecture, PX spans 1–109 (MHFSIPETES…SFLRRAQQET (109 aa)). R36, S38, K62, and R75 together coordinate a 1,2-diacyl-sn-glycero-3-phospho-(1D-myo-inositol-3-phosphate). A Ras-associating domain is found at 115-206 (EEVSLEVLLS…YKIVLRKSYW (92 aa)). Positions 115-432 (EEVSLEVLLS…DASRESMVKL (318 aa)) are FERM-like. The interval 270 to 432 (GYLRFDACVA…DASRESMVKL (163 aa)) is PTB-like F3 module. Residues S336, S407, S409, S415, S421, S437, and S440 each carry the phosphoserine modification. The disordered stretch occupies residues 401-426 (GGTLRRSDSQQAVKSPPLLESPDASR).

The protein belongs to the sorting nexin family. Monomer. Interacts with APP (via cytoplasmic YXNPXY motif). Interacts with KIF1B. Interacts with the C-termini of P-selectin, PTC, LDLR, VLDLR, LRP1 and LRP8. Interacts with KRIT1 (via N-terminus). Interacts with HRAS. Interacts with ITGB1 and ITGB5 (via NPxY motif). Interacts with CCDC22 and CCDC93; the interaction associates SNX17 with the CCC complex. Interacts (via C-terminus) with VPS26C and VPS35L; the interactions are direct and associate SNX17 with the retriever complex. Detected in brain neurons (at protein level). Broadly expressed, with highest levels in brain and placenta, and lowest levels in colon, intestine and liver.

The protein resides in the cytoplasm. Its subcellular location is the early endosome. It is found in the cytoplasmic vesicle membrane. Functionally, critical regulator of endosomal recycling of numerous surface proteins, including integrins, signaling receptor and channels. Binds to NPxY sequences in the cytoplasmic tails of target cargos. Associates with retriever and CCC complexes to prevent lysosomal degradation and promote cell surface recycling of numerous cargos such as integrins ITGB1, ITGB5 and their associated alpha subunits. Also required for maintenance of normal cell surface levels of APP and LRP1. Interacts with membranes containing phosphatidylinositol 3-phosphate (PtdIns(3P)). This chain is Sorting nexin-17 (Snx17), found in Mus musculus (Mouse).